We begin with the raw amino-acid sequence, 328 residues long: MKKNRMMMMIWSVGVVWMLLLVGGSYGEQCGRQAGGALCPGGNCCSQFGWCGSTTDYCGPGCQSQCGGPSPAPTDLSALISRSTFDQMLKHRNDGACPAKGFYTYDAFIAAAKAYPSFGNTGDTATRKREIAAFLGQTSHETTGGWATAPDGPYAWGYCFVRERNPSTYCSATPQFPCAPGQQYYGRGPIQISWNYNYGQCGRAIGVDLLNKPDLVATDSVISFKSALWFWMTAQSPKPSSHDVITSRWTPSSADVAARRLPGYGTVTNIINGGLECGRGQDSRVQDRIGFFKRYCDLLGVGYGNNLDCYSQTPFGNSLLLSDLVTSQ.

The N-terminal stretch at 1 to 27 is a signal peptide; the sequence is MKKNRMMMMIWSVGVVWMLLLVGGSYG. The 41-residue stretch at 28–68 folds into the Chitin-binding type-1 domain; sequence EQCGRQAGGALCPGGNCCSQFGWCGSTTDYCGPGCQSQCGG. 7 disulfides stabilise this stretch: C30-C45, C39-C51, C44-C58, C62-C66, C97-C159, C170-C178, and C277-C309. The Proton donor role is filled by E141. The propeptide at 318–328 is removed in mature form; it reads SLLLSDLVTSQ.

The protein belongs to the glycosyl hydrolase 19 family. Chitinase class I subfamily.

The protein localises to the vacuole. The catalysed reaction is Random endo-hydrolysis of N-acetyl-beta-D-glucosaminide (1-&gt;4)-beta-linkages in chitin and chitodextrins.. Its function is as follows. Defense against chitin-containing fungal pathogens. The chain is Endochitinase from Phaseolus vulgaris (Kidney bean).